The chain runs to 81 residues: Photosystem I iron-sulfur center (81 aa).

4Fe-4S ferredoxin-type domains are found at residues 2–31 (SHSV…MVPW) and 39–68 (IASA…VRVY). Cys11, Cys14, Cys17, Cys21, Cys48, Cys51, Cys54, and Cys58 together coordinate [4Fe-4S] cluster.

In terms of assembly, the eukaryotic PSI reaction center is composed of at least 11 subunits. [4Fe-4S] cluster serves as cofactor.

It localises to the plastid. The protein localises to the chloroplast thylakoid membrane. It carries out the reaction reduced [plastocyanin] + hnu + oxidized [2Fe-2S]-[ferredoxin] = oxidized [plastocyanin] + reduced [2Fe-2S]-[ferredoxin]. In terms of biological role, apoprotein for the two 4Fe-4S centers FA and FB of photosystem I (PSI); essential for photochemical activity. FB is the terminal electron acceptor of PSI, donating electrons to ferredoxin. The C-terminus interacts with PsaA/B/D and helps assemble the protein into the PSI complex. Required for binding of PsaD and PsaE to PSI. PSI is a plastocyanin/cytochrome c6-ferredoxin oxidoreductase, converting photonic excitation into a charge separation, which transfers an electron from the donor P700 chlorophyll pair to the spectroscopically characterized acceptors A0, A1, FX, FA and FB in turn. This chain is Photosystem I iron-sulfur center, found in Emiliania huxleyi (Coccolithophore).